The primary structure comprises 191 residues: GTP-dependent dephospho-CoA kinase (191 aa).

Asp46, Asp65, Lys67, and Glu122 together coordinate GTP.

The protein belongs to the GTP-dependent DPCK family.

The catalysed reaction is 3'-dephospho-CoA + GTP = GDP + CoA + H(+). The protein operates within cofactor biosynthesis; coenzyme A biosynthesis. Its function is as follows. Catalyzes the GTP-dependent phosphorylation of the 3'-hydroxyl group of dephosphocoenzyme A to form coenzyme A (CoA). The protein is GTP-dependent dephospho-CoA kinase of Methanopyrus kandleri (strain AV19 / DSM 6324 / JCM 9639 / NBRC 100938).